The sequence spans 808 residues: Phospholipase D alpha 1 (808 aa).

The C2 domain maps to 1–125 (MSKVLLHGTL…LDGDEVDKWI (125 aa)). Aspartate 186 serves as a coordination point for Ca(2+). Residues 326 to 364 (TMFTHHQKIVVVDHELPRGGSQKRRVMSFVGGIDLCDGR) form the PLD phosphodiesterase 1 domain. Residues histidine 331, lysine 333, and aspartate 338 contribute to the active site. An a 1,2-diacyl-sn-glycero-3-phosphate-binding site is contributed by histidine 331. Ca(2+)-binding residues include histidine 370 and histidine 404. The a 1,2-diacyl-sn-glycero-3-phosphate site is built by glutamine 520 and histidine 659. Residues 654 to 681 (FMIYVHSKMMIVDDEYIIVGSANINQRS) form the PLD phosphodiesterase 2 domain. Active-site residues include histidine 659, lysine 661, and aspartate 666. Residue glutamate 720 coordinates Ca(2+).

Belongs to the phospholipase D family. C2-PLD subfamily. As to quaternary structure, interacts (via C2 domain) with CARDA (via RGD or KGE motifs). Ca(2+) serves as cofactor.

It catalyses the reaction a 1,2-diacyl-sn-glycero-3-phosphocholine + H2O = a 1,2-diacyl-sn-glycero-3-phosphate + choline + H(+). Functionally, hydrolyzes glycerol-phospholipids at the terminal phosphodiesteric bond. Plays an important role in various cellular processes. The polypeptide is Phospholipase D alpha 1 (Cynara cardunculus (Cardoon)).